The sequence spans 333 residues: GTPase Obg (333 aa).

The Obg domain maps to 4 to 162 (GNFVDYVKIY…MDVILELKVL (159 aa)). The 170-residue stretch at 163-332 (ADVGLVGFPN…LKDKLWKMLN (170 aa)) folds into the OBG-type G domain. GTP is bound by residues 169–176 (GFPNAGKS), 194–198 (FTTLK), 216–219 (DIPG), 283–286 (SKCD), and 313–315 (SSV). Mg(2+)-binding residues include serine 176 and threonine 196.

This sequence belongs to the TRAFAC class OBG-HflX-like GTPase superfamily. OBG GTPase family. As to quaternary structure, monomer. The cofactor is Mg(2+).

It is found in the cytoplasm. Functionally, an essential GTPase which binds GTP, GDP and possibly (p)ppGpp with moderate affinity, with high nucleotide exchange rates and a fairly low GTP hydrolysis rate. Plays a role in control of the cell cycle, stress response, ribosome biogenesis and in those bacteria that undergo differentiation, in morphogenesis control. The polypeptide is GTPase Obg (Flavobacterium johnsoniae (strain ATCC 17061 / DSM 2064 / JCM 8514 / BCRC 14874 / CCUG 350202 / NBRC 14942 / NCIMB 11054 / UW101) (Cytophaga johnsonae)).